Reading from the N-terminus, the 416-residue chain is 4-hydroxy-3-methylbut-2-en-1-yl diphosphate synthase (flavodoxin) (416 aa).

Residues Cys304, Cys307, Cys350, and Glu357 each contribute to the [4Fe-4S] cluster site.

The protein belongs to the IspG family. [4Fe-4S] cluster is required as a cofactor.

The catalysed reaction is (2E)-4-hydroxy-3-methylbut-2-enyl diphosphate + oxidized [flavodoxin] + H2O + 2 H(+) = 2-C-methyl-D-erythritol 2,4-cyclic diphosphate + reduced [flavodoxin]. It participates in isoprenoid biosynthesis; isopentenyl diphosphate biosynthesis via DXP pathway; isopentenyl diphosphate from 1-deoxy-D-xylulose 5-phosphate: step 5/6. Converts 2C-methyl-D-erythritol 2,4-cyclodiphosphate (ME-2,4cPP) into 1-hydroxy-2-methyl-2-(E)-butenyl 4-diphosphate. This chain is 4-hydroxy-3-methylbut-2-en-1-yl diphosphate synthase (flavodoxin), found in Rhizobium etli (strain CIAT 652).